The primary structure comprises 372 residues: Cytochrome b (372 aa).

4 consecutive transmembrane segments (helical) span residues 25-45 (FGSM…FLAI), 69-90 (WIMQ…YIHI), 105-125 (WLSG…GYVL), and 170-190 (FFAL…IHII). Histidine 75 and histidine 89 together coordinate heme b. Residues histidine 174 and histidine 188 each contribute to the heme b site. Histidine 193 contacts a ubiquinone. 4 helical membrane passes run 218–238 (YKDM…LSFS), 280–300 (LGGT…PFTH), 312–332 (LSQA…WTAS), and 339–358 (FVTI…ITIP).

It belongs to the cytochrome b family. The cytochrome bc1 complex contains 3 respiratory subunits (MT-CYB, CYC1 and UQCRFS1), 2 core proteins (UQCRC1 and UQCRC2) and probably 6 low-molecular weight proteins. Heme b serves as cofactor.

It localises to the mitochondrion inner membrane. Functionally, component of the ubiquinol-cytochrome c reductase complex (complex III or cytochrome b-c1 complex) that is part of the mitochondrial respiratory chain. The b-c1 complex mediates electron transfer from ubiquinol to cytochrome c. Contributes to the generation of a proton gradient across the mitochondrial membrane that is then used for ATP synthesis. This chain is Cytochrome b (MT-CYB), found in Naja multifasciata (Burrowing cobra).